The sequence spans 38 residues: Kunitz-type trypsin inhibitor beta chain (38 aa).

Belongs to the protease inhibitor I3 (leguminous Kunitz-type inhibitor) family. Heterodimer of an alpha and a beta chain linked by a disulfide bond.

Functionally, inhibition of trypsin. The polypeptide is Kunitz-type trypsin inhibitor beta chain (Neltuma juliflora (Mesquite)).